Reading from the N-terminus, the 496-residue chain is uncharacterized protein (496 aa).

The span at 118–129 (LDRPFIKPRREN) shows a compositional bias: basic and acidic residues. Positions 118 to 187 (LDRPFIKPRR…NPHQSNRNTS (70 aa)) are disordered. Residues 151–187 (TSDSQYASPFENHSITNLPIGQKQPFNNPHQSNRNTS) show a composition bias toward polar residues.

This is an uncharacterized protein from Acanthamoeba polyphaga mimivirus (APMV).